The following is a 3414-amino-acid chain: Genome polyprotein (3414 aa).

A disordered region spans residues 1–30 (MVKKAILKGKGGGPPRRVSKETATKTRQPR). Topologically, residues 2-98 (VKKAILKGKG…LQKRGKRRSA (97 aa)) are cytoplasmic. Positions 97-117 (SATDWMSWLLVITLLGMTLAA) are cleaved as a propeptide — ER anchor for the capsid protein C, removed in mature form by serine protease NS3. The chain crosses the membrane as a helical span at residues 99 to 119 (TDWMSWLLVITLLGMTLAATV). Residues 120–242 (RKERDGSTVI…HLTRVEGWVW (123 aa)) lie on the Extracellular side of the membrane. Asn-144 carries N-linked (GlcNAc...) asparagine; by host glycosylation. Residues 243–260 (KNKLLALAMVTVVWLTLE) traverse the membrane as a helical segment. Ser-261 is a topological domain (cytoplasmic). The chain crosses the membrane as a helical span at residues 262-280 (VVTRVAVLVVLLCLAPVYA). Residues 281–727 (SRCTHLENRD…HTVLGGAFNS (447 aa)) are Extracellular-facing. Intrachain disulfides connect Cys-283/Cys-310, Cys-340/Cys-396, Cys-340/Cys-401, Cys-354/Cys-385, Cys-372/Cys-396, and Cys-372/Cys-401. Residues 378-391 (DRGWGNHCGLFGKG) form a fusion peptide region. N-linked (GlcNAc...) asparagine; by host glycosylation is present at Asn-434. 2 cysteine pairs are disulfide-bonded: Cys-466/Cys-570 and Cys-587/Cys-618. A helical membrane pass occupies residues 728–748 (IFGGVGFLPKLLLGVALAWLG). Over 749–755 (LNMRNPT) the chain is Extracellular. Residues 756 to 776 (MSMSFLLAGGLVLAMTLGVGA) form a helical membrane-spanning segment. Residues 777–1132 (DVGCAVDTER…RSMVVADNGE (356 aa)) are Extracellular-facing. 6 disulfide bridges follow: Cys-780–Cys-791, Cys-831–Cys-920, Cys-955–Cys-1000, Cys-1057–Cys-1106, Cys-1068–Cys-1090, and Cys-1089–Cys-1093. Asn-861, Asn-983, and Asn-999 each carry an N-linked (GlcNAc...) asparagine; by host glycan. Residues 1133-1153 (LLSEGGVPGIVALFVVLEYII) form a helical membrane-spanning segment. At 1154–1158 (RRRPS) the chain is on the cytoplasmic side. The chain crosses the membrane as a helical span at residues 1159–1179 (TGTTVVWGGIVVLALLVTGMV). Residues 1180–1187 (RIESLVRY) lie on the Lumenal side of the membrane. A helical membrane pass occupies residues 1188–1208 (VVAVGITFHLELGPEIVALML). Topologically, residues 1209–1293 (LQAVFELRVG…LLMALMTQQD (85 aa)) are cytoplasmic. A helical membrane pass occupies residues 1294 to 1314 (VVTVHHGLVCFLSVASACSVW). At 1315–1327 (RLLKGHREQKGLT) the chain is on the lumenal side. The chain crosses the membrane as a helical span at residues 1328–1348 (WVVPLAGLLGGEGSGIRLLAF). At 1349–1359 (WELSAHRGRRS) the chain is on the cytoplasmic side. A helical membrane pass occupies residues 1360 to 1378 (FSEPLTVVGVMLTLASGMM). Over 1379–1382 (RHTS) the chain is Lumenal. Residues 1383-1403 (QEALCALAVASFLLLMLVLGT) traverse the membrane as a helical segment. Residues 1404–1454 (RKMQLVAEWSGCVEWYPELVNEGGEVSLRVRQDAMGNFHLTELEKEERMMA) lie on the Cytoplasmic side of the membrane. The interacts with and activates NS3 protease stretch occupies residues 1410–1449 (AEWSGCVEWYPELVNEGGEVSLRVRQDAMGNFHLTELEKE). An intramembrane region (helical) is located at residues 1455–1475 (FWLIAGLAASAIHWSGILGVM). Over 1476-2160 (GLWTLTEMLR…RMAERDAPEA (685 aa)) the chain is Cytoplasmic. The Peptidase S7 domain occupies 1490–1669 (SDLVFSGQGG…EAEKSRPNLP (180 aa)). Residues His-1543, Asp-1567, and Ser-1627 each act as charge relay system; for serine protease NS3 activity in the active site. The 157-residue stretch at 1675 to 1831 (TGWTSKGQIT…ESNGAITSEE (157 aa)) folds into the Helicase ATP-binding domain. 1688–1695 (MHPGSGKT) is an ATP binding site. Residues 1779–1782 (DEAH) carry the DEAH box motif. Positions 1841 to 2000 (DGFDWITEYE…TLRGPVATFY (160 aa)) constitute a Helicase C-terminal domain. The residue at position 1883 (Lys-1883) is an N6-acetyllysine; by host. A helical transmembrane segment spans residues 2161–2181 (FLTMVEMMVLGLATLGVIWCF). Residues 2182-2189 (VVRTSISR) lie on the Lumenal side of the membrane. Positions 2190–2210 (MMLGTLVLLASLLLLWAGGVG) form an intramembrane region, helical. Residue Tyr-2211 is a topological domain, lumenal. A helical transmembrane segment spans residues 2212-2232 (GNMAGVALIFYTLLTVLQPEA). The Cytoplasmic portion of the chain corresponds to 2233–2244 (GKQRSSDDNKLA). A helical transmembrane segment spans residues 2245–2265 (YFLLTLCSLAGLVAANEMGFL). Over 2266 to 2299 (EKTKADLSTALWSEREEPRPWSEWTNVDIQPARS) the chain is Lumenal. The segment at residues 2300-2320 (WGTYVLVVSLFTPYIIHQLQT) is an intramembrane region (helical). Topologically, residues 2321 to 2343 (KIQQLVNSAVASGAQAMRDLGGG) are lumenal. Residues 2344 to 2364 (APFFGVAGHVMTLGVVSLIGA) constitute an intramembrane region (helical). The Lumenal portion of the chain corresponds to 2365–2368 (TPTS). Residues 2369-2389 (LMVGVGLAALHLAIVVSGLEA) traverse the membrane as a helical segment. At 2390–2432 (ELTQRAHKVFFSAMVRNPMVDGDVINPFGEGEAKPALYERKMS) the chain is on the cytoplasmic side. Residues 2433-2453 (LVLATVLCLMSVVMNRTVASI) traverse the membrane as a helical segment. The Lumenal portion of the chain corresponds to 2454–2477 (TEASAVGLAAAGQLLRPEADTLWT). The helical transmembrane segment at 2478–2498 (MPVACGMSGVVRGSLWGFLPL) threads the bilayer. Residues 2499 to 3414 (GHRLWLRASG…WELRLESSII (916 aa)) are Cytoplasmic-facing. The mRNA cap 0-1 NS5-type MT domain occupies 2512–2776 (GGSEGDTLGD…ELDLGVGTRC (265 aa)). S-adenosyl-L-methionine is bound at residue Ser-2567. At Ser-2567 the chain carries Phosphoserine. Lys-2572 serves as the catalytic For 2'-O-MTase activity. S-adenosyl-L-methionine is bound by residues Gly-2597, Trp-2598, Thr-2615, Ile-2616, Asp-2642, and Val-2643. The For 2'-O-MTase activity role is filled by Asp-2657. Ile-2658 serves as a coordination point for S-adenosyl-L-methionine. Residues Lys-2694 and Glu-2730 each act as for 2'-O-MTase activity in the active site. The segment at 2730-2734 (EMYYS) is interaction with host SCRIB. Tyr-2732 contacts S-adenosyl-L-methionine. Residues Glu-2950, His-2954, Cys-2959, and Cys-2962 each contribute to the Zn(2+) site. The RdRp catalytic domain occupies 3040 to 3189 (GLFYADDTAG…RPLDDRFGKA (150 aa)). Zn(2+)-binding residues include His-3224, Cys-3240, and Cys-3359.

In the N-terminal section; belongs to the class I-like SAM-binding methyltransferase superfamily. mRNA cap 0-1 NS5-type methyltransferase family. In terms of assembly, homodimer. Interacts (via N-terminus) with host EXOC1 (via C-terminus); this interaction results in EXOC1 degradation through the proteasome degradation pathway. As to quaternary structure, forms heterodimers with envelope protein E in the endoplasmic reticulum and Golgi. Homodimer; in the endoplasmic reticulum and Golgi. Interacts with protein prM. Interacts with non-structural protein 1. In terms of assembly, homodimer; Homohexamer when secreted. Interacts with envelope protein E. As to quaternary structure, interacts (via N-terminus) with serine protease NS3. Forms a heterodimer with serine protease NS3. May form homooligomers. In terms of assembly, forms a heterodimer with NS2B. Interacts with NS4B. Interacts with unphosphorylated RNA-directed RNA polymerase NS5; this interaction stimulates RNA-directed RNA polymerase NS5 guanylyltransferase activity. As to quaternary structure, interacts with serine protease NS3. Interacts with NS1. Homodimer. Interacts with host STAT2; this interaction inhibits the phosphorylation of the latter, and, when all viral proteins are present (polyprotein), targets STAT2 for degradation. Interacts with serine protease NS3. Interacts with host SCRIB; this interaction targets NS5 to the cell membrane periphery and nucleus, thereby allowing efficient host nuclear STAT1 inhibition. In terms of processing, specific enzymatic cleavages in vivo yield mature proteins. Cleavages in the lumen of endoplasmic reticulum are performed by host signal peptidase, whereas cleavages in the cytoplasmic side are performed by serine protease NS3. Signal cleavage at the 2K-4B site requires a prior NS3 protease-mediated cleavage at the 4A-2K site. Post-translationally, cleaved in post-Golgi vesicles by a host furin, releasing the mature small envelope protein M, and peptide pr. This cleavage is incomplete as up to 30% of viral particles still carry uncleaved prM. N-glycosylated. In terms of processing, N-glycosylated. The excreted form is glycosylated and this is required for efficient secretion of the protein from infected cells. Post-translationally, acetylated by host KAT5. Acetylation modulates NS3 RNA-binding and unwinding activities and plays an important positive role for viral replication. Phosphorylated on serines residues. This phosphorylation may trigger NS5 nuclear localization.

The protein resides in the virion. It localises to the host nucleus. The protein localises to the host cytoplasm. It is found in the host perinuclear region. Its subcellular location is the secreted. The protein resides in the virion membrane. It localises to the host endoplasmic reticulum membrane. The catalysed reaction is Selective hydrolysis of -Xaa-Xaa-|-Yaa- bonds in which each of the Xaa can be either Arg or Lys and Yaa can be either Ser or Ala.. The enzyme catalyses RNA(n) + a ribonucleoside 5'-triphosphate = RNA(n+1) + diphosphate. It catalyses the reaction a ribonucleoside 5'-triphosphate + H2O = a ribonucleoside 5'-diphosphate + phosphate + H(+). It carries out the reaction ATP + H2O = ADP + phosphate + H(+). The catalysed reaction is a 5'-end (5'-triphosphoguanosine)-ribonucleoside in mRNA + S-adenosyl-L-methionine = a 5'-end (N(7)-methyl 5'-triphosphoguanosine)-ribonucleoside in mRNA + S-adenosyl-L-homocysteine. The enzyme catalyses a 5'-end (N(7)-methyl 5'-triphosphoguanosine)-ribonucleoside in mRNA + S-adenosyl-L-methionine = a 5'-end (N(7)-methyl 5'-triphosphoguanosine)-(2'-O-methyl-ribonucleoside) in mRNA + S-adenosyl-L-homocysteine + H(+). Plays a role in virus budding by binding to the cell membrane and gathering the viral RNA into a nucleocapsid that forms the core of a mature virus particle. During virus entry, may induce genome penetration into the host cytoplasm after hemifusion induced by the surface proteins. Can migrate to the cell nucleus where it modulates host functions. In terms of biological role, inhibits RNA silencing by interfering with host Dicer. Its function is as follows. Prevents premature fusion activity of envelope proteins in trans-Golgi by binding to envelope protein E at pH6.0. After virion release in extracellular space, gets dissociated from E dimers. Functionally, acts as a chaperone for envelope protein E during intracellular virion assembly by masking and inactivating envelope protein E fusion peptide. prM is the only viral peptide matured by host furin in the trans-Golgi network probably to avoid catastrophic activation of the viral fusion activity in acidic Golgi compartment prior to virion release. prM-E cleavage is inefficient, and many virions are only partially matured. These uncleaved prM would play a role in immune evasion. May play a role in virus budding. Exerts cytotoxic effects by activating a mitochondrial apoptotic pathway through M ectodomain. May display a viroporin activity. In terms of biological role, binds to host cell surface receptor and mediates fusion between viral and cellular membranes. Envelope protein is synthesized in the endoplasmic reticulum in the form of heterodimer with protein prM. They play a role in virion budding in the ER, and the newly formed immature particle is covered with 60 spikes composed of heterodimer between precursor prM and envelope protein E. The virion is transported to the Golgi apparatus where the low pH causes dissociation of PrM-E heterodimers and formation of E homodimers. prM-E cleavage is inefficient, and many virions are only partially matured. These uncleaved prM would play a role in immune evasion. Its function is as follows. Involved in immune evasion, pathogenesis and viral replication. Once cleaved off the polyprotein, is targeted to three destinations: the viral replication cycle, the plasma membrane and the extracellular compartment. Essential for viral replication. Required for formation of the replication complex and recruitment of other non-structural proteins to the ER-derived membrane structures. Excreted as a hexameric lipoparticle that plays a role against host immune response. Antagonizing the complement function. Binds to the host macrophages and dendritic cells. Inhibits signal transduction originating from Toll-like receptor 3 (TLR3). Functionally, component of the viral RNA replication complex that functions in virion assembly and antagonizes the host immune response. Required cofactor for the serine protease function of NS3. May have membrane-destabilizing activity and form viroporins. In terms of biological role, displays three enzymatic activities: serine protease, NTPase and RNA helicase. NS3 serine protease, in association with NS2B, performs its autocleavage and cleaves the polyprotein at dibasic sites in the cytoplasm: C-prM, NS2A-NS2B, NS2B-NS3, NS3-NS4A, NS4A-2K and NS4B-NS5. NS3 RNA helicase binds RNA and unwinds dsRNA in the 3' to 5' direction. Its function is as follows. Regulates the ATPase activity of the NS3 helicase activity. NS4A allows NS3 helicase to conserve energy during unwinding. Functionally, functions as a signal peptide for NS4B and is required for the interferon antagonism activity of the latter. Induces the formation of ER-derived membrane vesicles where the viral replication takes place. Inhibits interferon (IFN)-induced host STAT1 phosphorylation and nuclear translocation, thereby preventing the establishment of cellular antiviral state by blocking the IFN-alpha/beta pathway. Inhibits STAT2 translocation in the nucleus after IFN-alpha treatment. In terms of biological role, replicates the viral (+) and (-) genome, and performs the capping of genomes in the cytoplasm. NS5 methylates viral RNA cap at guanine N-7 and ribose 2'-O positions. Besides its role in RNA genome replication, also prevents the establishment of cellular antiviral state by blocking the interferon-alpha/beta (IFN-alpha/beta) signaling pathway. Inhibits host TYK2 and STAT2 phosphorylation, thereby preventing activation of JAK-STAT signaling pathway. The polypeptide is Genome polyprotein (Tick-borne encephalitis virus European subtype (strain Neudoerfl) (NEUV)).